We begin with the raw amino-acid sequence, 396 residues long: Tyrosine--tRNA ligase (396 aa).

The 'HIGH' region signature appears at 39 to 48 (PTAPDLHLGH). Residues 223–227 (KMSKS) carry the 'KMSKS' region motif. Lys-226 contacts ATP. Residues 334–395 (LPVPQLLKQA…GKRKFARVTV (62 aa)) form the S4 RNA-binding domain.

The protein belongs to the class-I aminoacyl-tRNA synthetase family. TyrS type 2 subfamily. In terms of assembly, homodimer.

It is found in the cytoplasm. It catalyses the reaction tRNA(Tyr) + L-tyrosine + ATP = L-tyrosyl-tRNA(Tyr) + AMP + diphosphate + H(+). In terms of biological role, catalyzes the attachment of tyrosine to tRNA(Tyr) in a two-step reaction: tyrosine is first activated by ATP to form Tyr-AMP and then transferred to the acceptor end of tRNA(Tyr). This chain is Tyrosine--tRNA ligase, found in Thiobacillus denitrificans (strain ATCC 25259 / T1).